Reading from the N-terminus, the 163-residue chain is MSDNPNPVIYVDNENCKSFEDNENSFNSSRYSIEEDQIDEFDEQEIFDLVRSITDPEHPLTLEQLNVVRIENVNINLENSYILLYFTPTVPHCSMANLIGLSIKEKLARSLPKRFKVDVIVTPGSHSSESSVNKQLNDKERVSAALDTSSSILTIVNECIKQN.

It belongs to the MIP18 family.

It localises to the nucleus. It is found in the cytoplasm. The protein localises to the cytoskeleton. Its subcellular location is the spindle. In terms of biological role, component of the cytosolic iron-sulfur (Fe/S) protein assembly machinery. Required for the maturation of extramitochondrial Fe/S proteins. May play a role in chromosome segregation through establishment of sister chromatid cohesion. This Dictyostelium discoideum (Social amoeba) protein is Cytosolic iron-sulfur assembly component 2B.